A 379-amino-acid chain; its full sequence is Chaperone protein DnaJ (379 aa).

The 66-residue stretch at 5–70 (DYYEVLGVSR…QKRAAYDQYG (66 aa)) folds into the J domain. The segment at 134–212 (GVTKEIRIPT…CHGHGRVEKS (79 aa)) adopts a CR-type zinc-finger fold. Zn(2+) contacts are provided by Cys-147, Cys-150, Cys-164, Cys-167, Cys-186, Cys-189, Cys-200, and Cys-203. CXXCXGXG motif repeat units lie at residues 147-154 (CDVCHGSG), 164-171 (CPTCHGAG), 186-193 (CPHCHGRG), and 200-207 (CNKCHGHG).

Belongs to the DnaJ family. In terms of assembly, homodimer. It depends on Zn(2+) as a cofactor.

The protein resides in the cytoplasm. In terms of biological role, participates actively in the response to hyperosmotic and heat shock by preventing the aggregation of stress-denatured proteins and by disaggregating proteins, also in an autonomous, DnaK-independent fashion. Unfolded proteins bind initially to DnaJ; upon interaction with the DnaJ-bound protein, DnaK hydrolyzes its bound ATP, resulting in the formation of a stable complex. GrpE releases ADP from DnaK; ATP binding to DnaK triggers the release of the substrate protein, thus completing the reaction cycle. Several rounds of ATP-dependent interactions between DnaJ, DnaK and GrpE are required for fully efficient folding. Also involved, together with DnaK and GrpE, in the DNA replication of plasmids through activation of initiation proteins. The protein is Chaperone protein DnaJ of Yersinia pestis bv. Antiqua (strain Antiqua).